The primary structure comprises 249 residues: Salivary antigen-5 (249 aa).

A signal peptide spans 1–26; it reads MAKTQCPLVFSLLALALIGTLQSSAA. In terms of domain architecture, SCP spans 50–193; it reads SIHNYYRNLT…WYAGYLVCNY (144 aa). Residues N57, N127, and N168 are each glycosylated (N-linked (GlcNAc...) asparagine).

This sequence belongs to the CRISP family. Venom allergen 5-like subfamily. Monomeric in solution. Cu(2+) is required as a cofactor. In terms of tissue distribution, saliva (at protein level). Salivary gland (at protein level).

The protein resides in the secreted. Antioxidant protein that scavenges superoxide radicals. Removes superoxide radicals produced by PMA-stimulated host neutrophils. Inhibits host platelet aggregation induced by low doses of collagen by interfering with the pro-aggregatory properties of reactive oxygen species on platelets. Binds to heparin and sulfated glycosaminoglycans. The chain is Salivary antigen-5 from Dipetalogaster maximus (Blood-sucking bug).